Reading from the N-terminus, the 268-residue chain is Large ribosomal subunit protein uL4 (268 aa).

This sequence belongs to the universal ribosomal protein uL4 family. In terms of assembly, part of the 50S ribosomal subunit.

Its function is as follows. One of the primary rRNA binding proteins, this protein initially binds near the 5'-end of the 23S rRNA. It is important during the early stages of 50S assembly. It makes multiple contacts with different domains of the 23S rRNA in the assembled 50S subunit and ribosome. Functionally, forms part of the polypeptide exit tunnel. The chain is Large ribosomal subunit protein uL4 from Nanoarchaeum equitans (strain Kin4-M).